Reading from the N-terminus, the 350-residue chain is Streptomycin biosynthesis operon possible regulatory protein (350 aa).

Over residues 1 to 10 (MEHISGNSPE) the composition is skewed to polar residues. 3 disordered regions span residues 1–20 (MEHISGNSPEQVRERSAAVT), 168–189 (AGVPQSNVRIGRDGRARPLDPT), and 211–258 (AAQA…SRAD). Composition is skewed to basic and acidic residues over residues 177–189 (IGRDGRARPLDPT) and 223–242 (DVRKRLSRGESPLPERDRQQ).

The protein is Streptomycin biosynthesis operon possible regulatory protein (strR) of Streptomyces griseus.